A 130-amino-acid chain; its full sequence is Ribonuclease P protein component 2 (130 aa).

The protein belongs to the eukaryotic/archaeal RNase P protein component 2 family. In terms of assembly, consists of a catalytic RNA component and at least 4-5 protein subunits.

It is found in the cytoplasm. The enzyme catalyses Endonucleolytic cleavage of RNA, removing 5'-extranucleotides from tRNA precursor.. Part of ribonuclease P, a protein complex that generates mature tRNA molecules by cleaving their 5'-ends. This chain is Ribonuclease P protein component 2, found in Methanococcus maripaludis (strain C6 / ATCC BAA-1332).